Here is a 281-residue protein sequence, read N- to C-terminus: Transformer-2 protein homolog alpha (281 aa).

The segment at 1 to 116 is disordered; sequence MSDVEENNFE…TGSRANPDPN (116 aa). An N-acetylserine modification is found at serine 2. Phosphoserine is present on residues serine 2 and serine 14. Position 24 is a phosphothreonine (threonine 24). A compositionally biased stretch (basic residues) spans 51 to 82; the sequence is RSRSKSRSRSRRHSHRRYTRSRSHSHRRRSRS. 3 positions are modified to phosphoserine: serine 80, serine 82, and serine 84. Residue threonine 86 is modified to Phosphothreonine. A compositionally biased stretch (basic residues) spans 90-108; that stretch reads RRRRSRSHSPMSNRRRHTG. 2 positions are modified to phosphoserine: serine 94 and serine 96. The RRM domain maps to 117–195; it reads TCLGVFGLSL…RRIRVDYSIT (79 aa). Residue lysine 196 forms a Glycyl lysine isopeptide (Lys-Gly) (interchain with G-Cter in SUMO2) linkage. The linker stretch occupies residues 196–223; that stretch reads KRAHTPTPGIYMGRPTHSGGGGGGGGGG. Residues 199 to 281 are disordered; the sequence is HTPTPGIYMG…RSRSYSPRRY (83 aa). 2 positions are modified to phosphothreonine: threonine 200 and threonine 202. The segment covering 213-231 has biased composition (gly residues); the sequence is SGGGGGGGGGGGGGGGGGG. The residue at position 233 (arginine 233) is an Omega-N-methylarginine. Positions 233–257 are enriched in basic and acidic residues; that stretch reads RRRDSYYDRGYDRGYDRYEDYDYRR. Phosphoserine is present on serine 237. A compositionally biased stretch (basic residues) spans 267 to 281; that stretch reads YRSRSRSRSYSPRRY.

This sequence belongs to the splicing factor SR family. Binds to A3 enhancer proteins SRp75, SRp55, SRp40 and SRp30. Interacts with ILDR1 (via C-terminus) and ILDR2. Post-translationally, phosphorylated in the RS domains. As to expression, expressed in inner ear.

The protein localises to the nucleus. Sequence-specific RNA-binding protein which participates in the control of pre-mRNA splicing. This Mus musculus (Mouse) protein is Transformer-2 protein homolog alpha.